We begin with the raw amino-acid sequence, 460 residues long: Pentatricopeptide repeat-containing protein At5g43790 (460 aa).

9 PPR repeats span residues serine 70–phenylalanine 107, asparagine 111–phenylalanine 142, aspartate 149–proline 179, aspartate 180–proline 214, asparagine 215–leucine 249, asparagine 250–arginine 280, aspartate 281–proline 315, aspartate 316–proline 351, and lysine 352–lysine 382. Residues leucine 387–asparagine 460 are type E motif; degenerate.

It belongs to the PPR family. PCMP-E subfamily.

This chain is Pentatricopeptide repeat-containing protein At5g43790 (PCMP-E30), found in Arabidopsis thaliana (Mouse-ear cress).